The primary structure comprises 428 residues: Type II methyltransferase M.BanI (428 aa).

The SAM-dependent MTase C5-type domain maps to 3–417 (IKFVDLFAGI…EDLFQNNVNE (415 aa)). Cys76 is a catalytic residue.

This sequence belongs to the class I-like SAM-binding methyltransferase superfamily. C5-methyltransferase family. As to quaternary structure, monomer.

It catalyses the reaction a 2'-deoxycytidine in DNA + S-adenosyl-L-methionine = a 5-methyl-2'-deoxycytidine in DNA + S-adenosyl-L-homocysteine + H(+). Its function is as follows. A methylase, recognizes the double-stranded sequence 5'-GGYRCC-3', methylates C-4 on both strands, and protects the DNA from cleavage by the BanI endonuclease. This Aneurinibacillus aneurinilyticus (Bacillus aneurinolyticus) protein is Type II methyltransferase M.BanI (banIM).